The sequence spans 360 residues: Chorismate synthase (360 aa).

Residues Arg-48 and Arg-54 each contribute to the NADP(+) site. FMN-binding positions include 125–127 (RSS), 246–247 (NA), Gly-286, 301–305 (KPTSS), and Arg-327.

It belongs to the chorismate synthase family. As to quaternary structure, homotetramer. It depends on FMNH2 as a cofactor.

It catalyses the reaction 5-O-(1-carboxyvinyl)-3-phosphoshikimate = chorismate + phosphate. It functions in the pathway metabolic intermediate biosynthesis; chorismate biosynthesis; chorismate from D-erythrose 4-phosphate and phosphoenolpyruvate: step 7/7. Its function is as follows. Catalyzes the anti-1,4-elimination of the C-3 phosphate and the C-6 proR hydrogen from 5-enolpyruvylshikimate-3-phosphate (EPSP) to yield chorismate, which is the branch point compound that serves as the starting substrate for the three terminal pathways of aromatic amino acid biosynthesis. This reaction introduces a second double bond into the aromatic ring system. The polypeptide is Chorismate synthase (Glaesserella parasuis serovar 5 (strain SH0165) (Haemophilus parasuis)).